We begin with the raw amino-acid sequence, 298 residues long: Lipoyl synthase (298 aa).

The [4Fe-4S] cluster site is built by C40, C45, C51, C67, C71, C74, and S280. The Radical SAM core domain occupies 53 to 269; sequence AVRRTATFMI…KEIALSKGFT (217 aa).

Belongs to the radical SAM superfamily. Lipoyl synthase family. Requires [4Fe-4S] cluster as cofactor.

It localises to the cytoplasm. The enzyme catalyses [[Fe-S] cluster scaffold protein carrying a second [4Fe-4S](2+) cluster] + N(6)-octanoyl-L-lysyl-[protein] + 2 oxidized [2Fe-2S]-[ferredoxin] + 2 S-adenosyl-L-methionine + 4 H(+) = [[Fe-S] cluster scaffold protein] + N(6)-[(R)-dihydrolipoyl]-L-lysyl-[protein] + 4 Fe(3+) + 2 hydrogen sulfide + 2 5'-deoxyadenosine + 2 L-methionine + 2 reduced [2Fe-2S]-[ferredoxin]. It participates in protein modification; protein lipoylation via endogenous pathway; protein N(6)-(lipoyl)lysine from octanoyl-[acyl-carrier-protein]. In terms of biological role, catalyzes the radical-mediated insertion of two sulfur atoms into the C-6 and C-8 positions of the octanoyl moiety bound to the lipoyl domains of lipoate-dependent enzymes, thereby converting the octanoylated domains into lipoylated derivatives. The chain is Lipoyl synthase from Geobacillus sp. (strain WCH70).